The primary structure comprises 306 residues: Small ribosomal subunit protein uS2 (306 aa).

Serine 2 bears the N-acetylserine mark. 2 laminin-binding regions span residues 161–180 (IPCN…MLAR) and 205–229 (RDPE…EYQG). 5 [DE]-W-[ST] repeats span residues 230-232 (EWT), 245-247 (DWS), 276-278 (DWS), 286-288 (DWS), and 304-306 (EWS). The interval 242-306 (EVADWSEGVQ…EWTGTTTEWS (65 aa)) is laminin-binding. The tract at residues 261–306 (PAERPEIPAAKPAAEDWSSQPASTDDWSAAPTAQASEWTGTTTEWS) is disordered. The span at 277 to 306 (WSSQPASTDDWSAAPTAQASEWTGTTTEWS) shows a compositional bias: polar residues.

This sequence belongs to the universal ribosomal protein uS2 family. As to quaternary structure, monomer (37LRP) and homodimer (67LR). Component of the small ribosomal subunit. Mature ribosomes consist of a small (40S) and a large (60S) subunit. The 40S subunit contains about 33 different proteins and 1 molecule of RNA (18S). The 60S subunit contains about 49 different proteins and 3 molecules of RNA (28S, 5.8S and 5S). Interacts with rps21. Interacts with several laminins including at least lamb1. Interacts with mdk. In terms of processing, acylated. Acylation may be a prerequisite for conversion of the monomeric 37 kDa laminin receptor precursor (37LRP) to the mature dimeric 67 kDa laminin receptor (67LR), and may provide a mechanism for membrane association. Post-translationally, cleaved by stromelysin-3 (ST3) at the cell surface. Cleavage by stromelysin-3 may be a mechanism to alter cell-extracellular matrix interactions.

Its subcellular location is the cell membrane. The protein localises to the cytoplasm. It localises to the nucleus. In terms of biological role, required for the assembly and/or stability of the 40S ribosomal subunit. Required for the processing of the 20S rRNA-precursor to mature 18S rRNA in a late step of the maturation of 40S ribosomal subunits. Also functions as a cell surface receptor for laminin. Plays a role in cell adhesion to the basement membrane and in the consequent activation of signaling transduction pathways. May play a role in cell fate determination and tissue morphogenesis. In Xenopus tropicalis (Western clawed frog), this protein is Small ribosomal subunit protein uS2 (rpsa).